A 392-amino-acid chain; its full sequence is Large ribosomal subunit protein uL3 (392 aa).

Belongs to the universal ribosomal protein uL3 family. Component of the large ribosomal subunit (LSU). Mature N.crassa ribosomes consist of a small (40S) and a large (60S) subunit. The 40S small subunit contains 1 molecule of ribosomal RNA (18S rRNA) and at least 32 different proteins. The large 60S subunit contains 3 rRNA molecules (26S, 5.8S and 5S rRNA) and at least 42 different proteins.

Its subcellular location is the cytoplasm. In terms of biological role, component of the ribosome, a large ribonucleoprotein complex responsible for the synthesis of proteins in the cell. The small ribosomal subunit (SSU) binds messenger RNAs (mRNAs) and translates the encoded message by selecting cognate aminoacyl-transfer RNA (tRNA) molecules. The large subunit (LSU) contains the ribosomal catalytic site termed the peptidyl transferase center (PTC), which catalyzes the formation of peptide bonds, thereby polymerizing the amino acids delivered by tRNAs into a polypeptide chain. The nascent polypeptides leave the ribosome through a tunnel in the LSU and interact with protein factors that function in enzymatic processing, targeting, and the membrane insertion of nascent chains at the exit of the ribosomal tunnel. The protein is Large ribosomal subunit protein uL3 (rpl-3) of Neurospora crassa (strain ATCC 24698 / 74-OR23-1A / CBS 708.71 / DSM 1257 / FGSC 987).